We begin with the raw amino-acid sequence, 345 residues long: Putative F-box protein At3g17265 (345 aa).

The F-box domain occupies 1 to 46 (MMFAYLPPDLESEILSRVPATFLKELQTTCKRWYALFRDPIFVKKN).

This chain is Putative F-box protein At3g17265, found in Arabidopsis thaliana (Mouse-ear cress).